Here is a 474-residue protein sequence, read N- to C-terminus: GTPase Der (474 aa).

EngA-type G domains are found at residues 3–167 (LTIA…GSER) and 204–379 (IRIA…RVWN). GTP contacts are provided by residues 9 to 16 (GRPNVGKS), 56 to 60 (DTAGL), 119 to 122 (NKSE), 210 to 217 (GRPNTGKS), 257 to 261 (DTAGL), and 322 to 325 (NKWD). Residues 380-464 (RRISTAKLNQ…PVRLSLRASD (85 aa)) enclose the KH-like domain.

The protein belongs to the TRAFAC class TrmE-Era-EngA-EngB-Septin-like GTPase superfamily. EngA (Der) GTPase family. In terms of assembly, associates with the 50S ribosomal subunit.

In terms of biological role, GTPase that plays an essential role in the late steps of ribosome biogenesis. This Bartonella tribocorum (strain CIP 105476 / IBS 506) protein is GTPase Der.